Consider the following 4717-residue polypeptide: Midasin (4717 aa).

AAA-ATPase protomer stretches follow at residues 149-384, 458-797, 871-1131, 1157-1448, 1552-1811, and 1858-2106; these read LVQK…FGAF, EQLA…GLRR, EHYI…QEVI, SLKE…NACE, VLRA…EVFD, and VLES…FLLK. Residues 159-166 and 474-481 each bind ATP; these read GPEGIGKK and GETGTGKT. At Ser593 the chain carries Phosphoserine. Residues 901-908, 1193-1200, 1566-1573, and 1876-1883 contribute to the ATP site; these read GPTSSGKT, GDTGCGKT, GSPGVGKT, and GDTATGKT. The tract at residues 2173–3925 is linker; the sequence is KLLRKVLLTN…SGVGAEDITN (1753 aa). 3 disordered regions span residues 3898–3924, 3936–4283, and 4295–4365; these read PQEGKSNSGELESGTGLGSGVGAEDIT, LANE…LGDH, and EWED…EVGD. Acidic residues-rich tracts occupy residues 3936-3950 and 3973-3993; these read LANEEDTANQSDLDE and ENSDSEEENQDLDEEVNDIPE. Positions 4020-4030 are enriched in polar residues; the sequence is NEQSAANNESD. Residues 4031 to 4049 show a composition bias toward basic and acidic residues; sequence LVSKEDDNKALEDKDRQEK. The segment covering 4050-4066 has biased composition (acidic residues); it reads EDEEEMSDDVGIDDEIQ. Over residues 4080 to 4103 the composition is skewed to basic and acidic residues; it reads NEDHLDLPEDLKLDEKEGDVSKDS. 3 stretches are compositionally biased toward acidic residues: residues 4104 to 4177, 4184 to 4196, and 4226 to 4236; these read DLED…ESTE, EELEQGEVPEDQA, and ENEELGEEDGA. Basic and acidic residues-rich tracts occupy residues 4258-4275 and 4329-4342; these read QKGEDTSTPKEAMSEADR and AEKDQIKSIDRDES. Positions 4343–4355 are enriched in polar residues; it reads ANQNPDSMNSTNI. The 203-residue stretch at 4505-4707 folds into the VWFA domain; it reads QVMISIDDSK…ELPQLLSSAL (203 aa).

It belongs to the midasin family. As to quaternary structure, associates with pre-60S ribosomes in the nucleoplasm.

Its subcellular location is the nucleus. It localises to the nucleolus. The protein resides in the nucleoplasm. Nuclear chaperone required for maturation and nuclear export of pre-60S ribosome subunits. Functions at successive maturation steps to remove ribosomal factors at critical transition points, first driving the exit of early pre-60S particles from the nucleolus and then driving late pre-60S particles from the nucleus. In Schizosaccharomyces pombe (strain 972 / ATCC 24843) (Fission yeast), this protein is Midasin (mdn1).